A 349-amino-acid chain; its full sequence is DNA-directed RNA polymerase subunit alpha (349 aa).

The interval 1-226 (MLIAQRPTLI…GLFGLAQELN (226 aa)) is alpha N-terminal domain (alpha-NTD). An alpha C-terminal domain (alpha-CTD) region spans residues 241–349 (AALAADLALP…GAEFIETEQY (109 aa)). A disordered region spans residues 309 to 349 (KDSPPGFDPRQAVDTYGTDAYSPSFSDPSDDGAEFIETEQY). Positions 336–349 (PSDDGAEFIETEQY) are enriched in acidic residues.

Belongs to the RNA polymerase alpha chain family. As to quaternary structure, homodimer. The RNAP catalytic core consists of 2 alpha, 1 beta, 1 beta' and 1 omega subunit. When a sigma factor is associated with the core the holoenzyme is formed, which can initiate transcription.

The catalysed reaction is RNA(n) + a ribonucleoside 5'-triphosphate = RNA(n+1) + diphosphate. DNA-dependent RNA polymerase catalyzes the transcription of DNA into RNA using the four ribonucleoside triphosphates as substrates. In Frankia casuarinae (strain DSM 45818 / CECT 9043 / HFP020203 / CcI3), this protein is DNA-directed RNA polymerase subunit alpha.